The following is a 231-amino-acid chain: 7-cyano-7-deazaguanine synthase (231 aa).

11 to 21 (LSAGLDSTVNA) contacts ATP. Zn(2+)-binding residues include C197, C205, C208, and C211.

It belongs to the QueC family. It depends on Zn(2+) as a cofactor.

The enzyme catalyses 7-carboxy-7-deazaguanine + NH4(+) + ATP = 7-cyano-7-deazaguanine + ADP + phosphate + H2O + H(+). It functions in the pathway purine metabolism; 7-cyano-7-deazaguanine biosynthesis. Functionally, catalyzes the ATP-dependent conversion of 7-carboxy-7-deazaguanine (CDG) to 7-cyano-7-deazaguanine (preQ(0)). This chain is 7-cyano-7-deazaguanine synthase, found in Bdellovibrio bacteriovorus (strain ATCC 15356 / DSM 50701 / NCIMB 9529 / HD100).